The sequence spans 464 residues: ATP synthase subunit beta (464 aa).

ATP is bound at residue 152–159; it reads GGAGVGKT.

Belongs to the ATPase alpha/beta chains family. As to quaternary structure, F-type ATPases have 2 components, CF(1) - the catalytic core - and CF(0) - the membrane proton channel. CF(1) has five subunits: alpha(3), beta(3), gamma(1), delta(1), epsilon(1). CF(0) has three main subunits: a(1), b(2) and c(9-12). The alpha and beta chains form an alternating ring which encloses part of the gamma chain. CF(1) is attached to CF(0) by a central stalk formed by the gamma and epsilon chains, while a peripheral stalk is formed by the delta and b chains.

The protein localises to the cell membrane. It catalyses the reaction ATP + H2O + 4 H(+)(in) = ADP + phosphate + 5 H(+)(out). Its function is as follows. Produces ATP from ADP in the presence of a proton gradient across the membrane. The catalytic sites are hosted primarily by the beta subunits. The protein is ATP synthase subunit beta of Ureaplasma parvum serovar 3 (strain ATCC 27815 / 27 / NCTC 11736).